A 1111-amino-acid polypeptide reads, in one-letter code: Isoleucine--tRNA ligase (1111 aa).

The 'HIGH' region motif lies at 52-62; it reads PFANGLPHYGH. Positions 645-649 match the 'KMSKS' region motif; sequence KLSKR. ATP is bound at residue K648.

Belongs to the class-I aminoacyl-tRNA synthetase family. IleS type 2 subfamily. As to quaternary structure, monomer. Zn(2+) serves as cofactor.

The protein localises to the cytoplasm. It catalyses the reaction tRNA(Ile) + L-isoleucine + ATP = L-isoleucyl-tRNA(Ile) + AMP + diphosphate. Functionally, catalyzes the attachment of isoleucine to tRNA(Ile). As IleRS can inadvertently accommodate and process structurally similar amino acids such as valine, to avoid such errors it has two additional distinct tRNA(Ile)-dependent editing activities. One activity is designated as 'pretransfer' editing and involves the hydrolysis of activated Val-AMP. The other activity is designated 'posttransfer' editing and involves deacylation of mischarged Val-tRNA(Ile). This is Isoleucine--tRNA ligase from Wolbachia pipientis wMel.